The following is a 337-amino-acid chain: GTPase Obg (337 aa).

Residues 1–161 form the Obg domain; sequence MNLTDNAVIF…FKIKLDFVFL (161 aa). Residues 162 to 333 enclose the OBG-type G domain; it reads ADVGLFGYSN…LINKILLFLE (172 aa). Residues 168–175, 193–197, 214–217, 282–285, and 314–316 contribute to the GTP site; these read GYSNTGRS, FTTLF, DIPS, NKTD, and SLN. Mg(2+) contacts are provided by Ser175 and Thr195.

Belongs to the TRAFAC class OBG-HflX-like GTPase superfamily. OBG GTPase family. In terms of assembly, monomer. Mg(2+) serves as cofactor.

Its subcellular location is the cytoplasm. An essential GTPase which binds GTP, GDP and possibly (p)ppGpp with moderate affinity, with high nucleotide exchange rates and a fairly low GTP hydrolysis rate. Plays a role in control of the cell cycle, stress response, ribosome biogenesis and in those bacteria that undergo differentiation, in morphogenesis control. The polypeptide is GTPase Obg (Wigglesworthia glossinidia brevipalpis).